Reading from the N-terminus, the 1235-residue chain is STE20-like serine/threonine-protein kinase (1235 aa).

Position 14 is a phosphoserine (Ser-14). The Protein kinase domain occupies 34–292 (WEIIGELGDG…TSQLLQHPFV (259 aa)). ATP-binding positions include 40 to 48 (LGDGAFGKV) and Lys-63. Catalysis depends on Asp-155, which acts as the Proton acceptor. At Thr-183 the chain carries Phosphothreonine. Ser-189 carries the post-translational modification Phosphoserine. The tract at residues 309–351 (AEVTEEVEDGKEEDEEEETENSLPIPASKRASSDLSIASSEED) is disordered. Positions 312–328 (TEEVEDGKEEDEEEETE) are enriched in acidic residues. 8 positions are modified to phosphoserine: Ser-330, Ser-340, Ser-341, Ser-344, Ser-347, Ser-348, Ser-354, and Ser-372. Disordered stretches follow at residues 363–393 (VSEK…PEKA) and 421–441 (ENER…DQET). Over residues 421 to 432 (ENEREKRPKLEN) the composition is skewed to basic and acidic residues. Phosphoserine is present on Ser-518. Residues 519–539 (EVGLTKEDTQEKLGEDDKTQK) are disordered. The segment covering 522 to 539 (LTKEDTQEKLGEDDKTQK) has biased composition (basic and acidic residues). Residue Ser-565 is modified to Phosphoserine. Thr-569 bears the Phosphothreonine mark. Ser-571, Ser-647, Ser-655, and Ser-667 each carry phosphoserine. A disordered region spans residues 613 to 760 (EGKNKEQAIN…GTGSTADTSS (148 aa)). A compositionally biased stretch (acidic residues) spans 638-650 (EGEEITESSSTEE). A compositionally biased stretch (basic and acidic residues) spans 679–695 (IDKEKKEIPVSIKKEPE). Residues 749-760 (DSGTGSTADTSS) show a composition bias toward low complexity. Residues Ser-777 and Ser-779 each carry the phosphoserine modification. Thr-814 is modified (phosphothreonine). Ser-818 carries the post-translational modification Phosphoserine. Residues 826-1069 (LRRQELRELR…LKNRQTQERA (244 aa)) are a coiled coil. A UVR domain is found at 875-910 (DQEIENLEKQQKQTIERLEQEHTNRLRDEAKRIKGE). Residue Thr-1097 is modified to Phosphothreonine. Residues 1109–1183 (AAQEEKRQKN…ELKEWREKLR (75 aa)) adopt a coiled-coil conformation.

The protein belongs to the protein kinase superfamily. STE Ser/Thr protein kinase family. STE20 subfamily. In terms of processing, proteolytically cleaved by caspase-3. Post-translationally, autophosphorylated. Ubiquitously expressed. Highest expression is found in heart and in skeletal muscle.

The protein resides in the cytoplasm. It carries out the reaction L-seryl-[protein] + ATP = O-phospho-L-seryl-[protein] + ADP + H(+). The enzyme catalyses L-threonyl-[protein] + ATP = O-phospho-L-threonyl-[protein] + ADP + H(+). Mediates apoptosis and actin stress fiber dissolution. The chain is STE20-like serine/threonine-protein kinase (SLK) from Homo sapiens (Human).